Reading from the N-terminus, the 308-residue chain is Porphobilinogen deaminase (308 aa).

An S-(dipyrrolylmethanemethyl)cysteine modification is found at Cys240.

This sequence belongs to the HMBS family. In terms of assembly, monomer. Dipyrromethane serves as cofactor.

It carries out the reaction 4 porphobilinogen + H2O = hydroxymethylbilane + 4 NH4(+). Its pathway is porphyrin-containing compound metabolism; protoporphyrin-IX biosynthesis; coproporphyrinogen-III from 5-aminolevulinate: step 2/4. Its function is as follows. Tetrapolymerization of the monopyrrole PBG into the hydroxymethylbilane pre-uroporphyrinogen in several discrete steps. The sequence is that of Porphobilinogen deaminase from Campylobacter lari (strain RM2100 / D67 / ATCC BAA-1060).